Here is a 616-residue protein sequence, read N- to C-terminus: Dihydroxy-acid dehydratase (616 aa).

Aspartate 81 is a binding site for Mg(2+). A [2Fe-2S] cluster-binding site is contributed by cysteine 122. Residues aspartate 123 and lysine 124 each contribute to the Mg(2+) site. Residue lysine 124 is modified to N6-carboxylysine. Position 195 (cysteine 195) interacts with [2Fe-2S] cluster. Glutamate 491 provides a ligand contact to Mg(2+). Serine 517 acts as the Proton acceptor in catalysis.

Belongs to the IlvD/Edd family. Homodimer. [2Fe-2S] cluster is required as a cofactor. The cofactor is Mg(2+).

It catalyses the reaction (2R)-2,3-dihydroxy-3-methylbutanoate = 3-methyl-2-oxobutanoate + H2O. It carries out the reaction (2R,3R)-2,3-dihydroxy-3-methylpentanoate = (S)-3-methyl-2-oxopentanoate + H2O. Its pathway is amino-acid biosynthesis; L-isoleucine biosynthesis; L-isoleucine from 2-oxobutanoate: step 3/4. It participates in amino-acid biosynthesis; L-valine biosynthesis; L-valine from pyruvate: step 3/4. Functions in the biosynthesis of branched-chain amino acids. Catalyzes the dehydration of (2R,3R)-2,3-dihydroxy-3-methylpentanoate (2,3-dihydroxy-3-methylvalerate) into 2-oxo-3-methylpentanoate (2-oxo-3-methylvalerate) and of (2R)-2,3-dihydroxy-3-methylbutanoate (2,3-dihydroxyisovalerate) into 2-oxo-3-methylbutanoate (2-oxoisovalerate), the penultimate precursor to L-isoleucine and L-valine, respectively. The sequence is that of Dihydroxy-acid dehydratase from Yersinia enterocolitica serotype O:8 / biotype 1B (strain NCTC 13174 / 8081).